The sequence spans 1150 residues: BAI1-associated protein 3 (1150 aa).

The disordered stretch occupies residues 22 to 44 (RRKTEQEPEVTNSQEPPTGAWKP). In terms of domain architecture, C2 1 spans 139–298 (SSEEHMEAIM…VKSARANGTA (160 aa)). The Ca(2+) site is built by Asp174 and Asp180. A disordered region spans residues 193–214 (APQEPSGQKEQRFGFRKGSKRS). Positions 258 and 260 each coordinate Ca(2+). Positions 626–747 (FELYLTLADT…EASLFYTELL (122 aa)) constitute an MHD1 domain. Positions 851 to 959 (DEAVAPLLKY…CSTRECIEQF (109 aa)) constitute an MHD2 domain. A C2 2 domain is found at 973–1099 (RFGRLTVRCH…GIARPHVGGG (127 aa)). The Ca(2+) site is built by Leu1003, Asp1004, Asp1010, Asp1068, Asp1070, Ser1073, and Asp1076.

Belongs to the unc-13 family. As to quaternary structure, interacts with ADGRB1, this interaction is direct. Interacts with endosomal SNARE proteins VAMP3, VAMP4, STX6 and STX16; this interaction is increased in the presence of calcium. Ca(2+) serves as cofactor. Prominently expressed in brain structures including hypothalamus, amygdala, stria terminalis and periaqueductal gray (at protein level). Expressed in nonneuronal tissues, including placenta, lung, pancreas, spleen, and testes. Within placenta, expression is restricted to the syncytiotrophoblasts.

It localises to the cytoplasm. The protein resides in the cytosol. Its subcellular location is the recycling endosome membrane. It is found in the late endosome membrane. The protein localises to the golgi apparatus. It localises to the trans-Golgi network membrane. The protein resides in the cell membrane. Functionally, functions in endosome to Golgi retrograde transport. In response to calcium influx, may interact with SNARE fusion receptors and membrane phospholipids to mediate endosome fusion with the trans-Golgi network. By promoting the recycling of secretory vesicle transmembrane proteins, it indirectly controls dense-core secretory vesicle biogenesis, maturation and their ability to mediate the constitutive and regulated secretion of neurotransmitters and hormones. May regulate behavior and food intake by controlling calcium-stimulated exocytosis of neurotransmitters including NPY and serotonin and hormones like insulin. Proposed to play a role in hypothalamic neuronal firing by modulating gamma-aminobutyric acid (GABA)ergic inhibitory neurotransmission. This is BAI1-associated protein 3 from Mus musculus (Mouse).